Consider the following 649-residue polypeptide: MSGTINPPDGGGSGARNPPVVRQRVLAPPKAGLLKDIKSVVEETFFHDAPLRDFKGQTPAKKALLGIQAVFPIIGWAREYTLRKFRGDLIAGLTIASLCIPQDIGYAKLANVDPKYGLYSSFVPPLIYAGMGSSRDIAIGPVAVVSLLVGTLCQAVIDPKKNPEDYLRLVFTATFFAGIFQAGLGFLRLGFLIDFLSHAAVVGFMGGAAITIALQQLKGFLGIKTFTKKTDIVSVMHSVFKNAEHGWNWQTIVIGASFLTFLLVTKFIGKRNRKLFWVPAIAPLISVIISTFFVFIFRADKQGVQIVKHIDQGINPISVHKIFFSGKYFTEGIRIGGIAGMVALTEAVAIARTFAAMKDYQIDGNKEMIALGTMNVVGSMTSCYIATGSFSRSAVNFMAGVETAVSNIVMAIVVALTLEFITPLFKYTPNAILAAIIISAVLGLIDIDAAILIWRIDKLDFLACMGAFLGVIFISVEIGLLIAVVISFAKILLQVTRPRTTVLGKLPNSNVYRNTLQYPDAAQIPGILIIRVDSAIYFSNSNYVRERASRWVREEQENAKEYGMPAIRFVIIEMSPVTDIDTSGIHSIEELLKSLEKQEIQLILANPGPVVIEKLYASKFVEEIGEKNIFLTVGDAVAVCSTEVAEQQT.

Residues 1-20 form a disordered region; it reads MSGTINPPDGGGSGARNPPV. Residues 1 to 86 lie on the Cytoplasmic side of the membrane; sequence MSGTINPPDG…AREYTLRKFR (86 aa). Residues 87 to 107 traverse the membrane as a helical segment; sequence GDLIAGLTIASLCIPQDIGYA. The Extracellular portion of the chain corresponds to 108–111; it reads KLAN. The helical transmembrane segment at 112 to 132 threads the bilayer; the sequence is VDPKYGLYSSFVPPLIYAGMG. Over 133–136 the chain is Cytoplasmic; the sequence is SSRD. Residues 137–157 traverse the membrane as a helical segment; that stretch reads IAIGPVAVVSLLVGTLCQAVI. Residues 158 to 168 lie on the Extracellular side of the membrane; it reads DPKKNPEDYLR. Helical transmembrane passes span 169 to 189 and 190 to 210; these read LVFT…FLRL and GFLI…GAAI. The Extracellular segment spans residues 211-248; the sequence is TIALQQLKGFLGIKTFTKKTDIVSVMHSVFKNAEHGWN. A helical transmembrane segment spans residues 249–269; it reads WQTIVIGASFLTFLLVTKFIG. Over 270–275 the chain is Cytoplasmic; that stretch reads KRNRKL. Residues 276-296 traverse the membrane as a helical segment; it reads FWVPAIAPLISVIISTFFVFI. At 297–334 the chain is on the extracellular side; it reads FRADKQGVQIVKHIDQGINPISVHKIFFSGKYFTEGIR. A helical transmembrane segment spans residues 335 to 355; that stretch reads IGGIAGMVALTEAVAIARTFA. The Cytoplasmic portion of the chain corresponds to 356–367; sequence AMKDYQIDGNKE. The helical transmembrane segment at 368 to 388 threads the bilayer; that stretch reads MIALGTMNVVGSMTSCYIATG. At 389 to 404 the chain is on the extracellular side; it reads SFSRSAVNFMAGVETA. Residues 405–425 form a helical membrane-spanning segment; sequence VSNIVMAIVVALTLEFITPLF. The Cytoplasmic portion of the chain corresponds to 426–431; the sequence is KYTPNA. A helical transmembrane segment spans residues 432-452; that stretch reads ILAAIIISAVLGLIDIDAAIL. The Extracellular portion of the chain corresponds to 453–465; the sequence is IWRIDKLDFLACM. A helical membrane pass occupies residues 466–486; sequence GAFLGVIFISVEIGLLIAVVI. The Cytoplasmic segment spans residues 487–649; sequence SFAKILLQVT…CSTEVAEQQT (163 aa). The STAS domain maps to 517 to 640; that stretch reads QYPDAAQIPG…LTVGDAVAVC (124 aa).

It belongs to the SLC26A/SulP transporter (TC 2.A.53) family. Interacts with OASA1 through its STAS domain. In terms of tissue distribution, expressed in lateral root cap, root hairs, epidermal and cortical cells of roots.

It is found in the membrane. Functionally, high-affinity H(+)/sulfate cotransporter that mediates the uptake of the environmental sulfate by plant roots under low-sulfur conditions. Plays a central role in the regulation of sulfate assimilation. In Arabidopsis thaliana (Mouse-ear cress), this protein is Sulfate transporter 1.1 (SULTR1;1).